A 157-amino-acid polypeptide reads, in one-letter code: Protein BeeE (157 aa).

The protein belongs to the phage portal family.

The sequence is that of Protein BeeE (beeE) from Escherichia coli (strain K12).